Here is a 355-residue protein sequence, read N- to C-terminus: uncharacterized protein (355 aa).

This sequence belongs to the TmcAL family.

This is an uncharacterized protein from Methanocaldococcus jannaschii (strain ATCC 43067 / DSM 2661 / JAL-1 / JCM 10045 / NBRC 100440) (Methanococcus jannaschii).